A 574-amino-acid chain; its full sequence is (R)-mandelonitrile lyase 4 (574 aa).

Positions 1–27 (MEKSTMSAVVLVLNLLVLHLQYSEVHS) are cleaved as a signal peptide. Asn-30 carries N-linked (GlcNAc...) asparagine glycosylation. Residue 64 to 65 (TS) participates in FAD binding. Asn-76 carries an N-linked (GlcNAc...) asparagine glycan. FAD is bound by residues 83-84 (ER), Thr-134, and 138-141 (NAGV). N-linked (GlcNAc...) asparagine glycosylation is found at Asn-146, Asn-151, and Asn-179. Val-245 contacts FAD. N-linked (GlcNAc...) asparagine glycans are attached at residues Asn-268 and Asn-310. Substrate is bound at residue Cys-357. Residues Asn-381, Asn-407, and Asn-468 are each glycosylated (N-linked (GlcNAc...) asparagine). Cysteines 428 and 479 form a disulfide. Tyr-486 is a binding site for substrate. Residues 487–488 (WH) and Gly-516 contribute to the FAD site. His-488 functions as the Proton donor in the catalytic mechanism. His-526 acts as the Proton acceptor in catalysis. 527-528 (PQ) contributes to the FAD binding site.

It belongs to the GMC oxidoreductase family. Monomer. FAD is required as a cofactor.

The protein resides in the vacuole. It localises to the aleurone grain. It carries out the reaction (R)-mandelonitrile = benzaldehyde + hydrogen cyanide. Involved in cyanogenesis, the release of HCN from injured tissues. Catalyzes the stereospecific addition of HCN to a variety of aldehydes in vitro. It is a major seed constituent, and could have the additional role of a storage form for reduced nitrogen. The sequence is that of (R)-mandelonitrile lyase 4 (MDL4) from Prunus serotina (Black cherry).